Reading from the N-terminus, the 542-residue chain is CTP synthase (542 aa).

The amidoligase domain stretch occupies residues 1-265 (MARYVFITGG…DSEVLSAFGI (265 aa)). CTP is bound at residue Ser13. Ser13 is a binding site for UTP. 14–19 (SLGKGI) provides a ligand contact to ATP. Tyr54 contributes to the L-glutamine binding site. Asp71 is a binding site for ATP. Positions 71 and 139 each coordinate Mg(2+). CTP-binding positions include 146–148 (DIE), 186–191 (KTKPTQ), and Lys222. UTP is bound by residues 186-191 (KTKPTQ) and Lys222. The 251-residue stretch at 291–541 (TIAVVGKYTG…IEAAIEQSRL (251 aa)) folds into the Glutamine amidotransferase type-1 domain. An L-glutamine-binding site is contributed by Gly353. The Nucleophile; for glutamine hydrolysis role is filled by Cys380. L-glutamine-binding positions include 381–384 (FGMQ), Glu404, and Arg469. Residues His514 and Glu516 contribute to the active site.

This sequence belongs to the CTP synthase family. As to quaternary structure, homotetramer.

The catalysed reaction is UTP + L-glutamine + ATP + H2O = CTP + L-glutamate + ADP + phosphate + 2 H(+). It carries out the reaction L-glutamine + H2O = L-glutamate + NH4(+). It catalyses the reaction UTP + NH4(+) + ATP = CTP + ADP + phosphate + 2 H(+). It functions in the pathway pyrimidine metabolism; CTP biosynthesis via de novo pathway; CTP from UDP: step 2/2. Its activity is regulated as follows. Allosterically activated by GTP, when glutamine is the substrate; GTP has no effect on the reaction when ammonia is the substrate. The allosteric effector GTP functions by stabilizing the protein conformation that binds the tetrahedral intermediate(s) formed during glutamine hydrolysis. Inhibited by the product CTP, via allosteric rather than competitive inhibition. In terms of biological role, catalyzes the ATP-dependent amination of UTP to CTP with either L-glutamine or ammonia as the source of nitrogen. Regulates intracellular CTP levels through interactions with the four ribonucleotide triphosphates. The sequence is that of CTP synthase from Brucella abortus (strain 2308).